A 213-amino-acid polypeptide reads, in one-letter code: Holliday junction resolvase RecU (213 aa).

The Mg(2+) site is built by T99, D101, E114, and Q133.

This sequence belongs to the RecU family. The cofactor is Mg(2+).

It is found in the cytoplasm. It carries out the reaction Endonucleolytic cleavage at a junction such as a reciprocal single-stranded crossover between two homologous DNA duplexes (Holliday junction).. In terms of biological role, endonuclease that resolves Holliday junction intermediates in genetic recombination. Cleaves mobile four-strand junctions by introducing symmetrical nicks in paired strands. Promotes annealing of linear ssDNA with homologous dsDNA. Required for DNA repair, homologous recombination and chromosome segregation. The sequence is that of Holliday junction resolvase RecU from Lactococcus lactis subsp. lactis (strain IL1403) (Streptococcus lactis).